The sequence spans 88 residues: Cuticle protein 70, isoforms A and B (88 aa).

A run of 5 repeats spans residues 7–10 (AAPA), 48–51 (AAPA), 55–58 (AAVP), 60–63 (AAPV), and 66–69 (AAPV).

Its function is as follows. Component of the cuticle of migratory locust which contains more than 100 different structural proteins. The protein is Cuticle protein 70, isoforms A and B of Locusta migratoria (Migratory locust).